Reading from the N-terminus, the 576-residue chain is Formate--tetrahydrofolate ligase (576 aa).

64 to 71 (TPLGEGKT) contributes to the ATP binding site.

This sequence belongs to the formate--tetrahydrofolate ligase family.

It carries out the reaction (6S)-5,6,7,8-tetrahydrofolate + formate + ATP = (6R)-10-formyltetrahydrofolate + ADP + phosphate. The protein operates within one-carbon metabolism; tetrahydrofolate interconversion. The chain is Formate--tetrahydrofolate ligase from Aeromonas hydrophila subsp. hydrophila (strain ATCC 7966 / DSM 30187 / BCRC 13018 / CCUG 14551 / JCM 1027 / KCTC 2358 / NCIMB 9240 / NCTC 8049).